The sequence spans 670 residues: DNA ligase (670 aa).

NAD(+)-binding positions include 32–36, 81–82, and Glu114; these read DSEYD and SL. Lys116 functions as the N6-AMP-lysine intermediate in the catalytic mechanism. NAD(+) contacts are provided by Arg137, Glu174, Lys291, and Lys315. Zn(2+)-binding residues include Cys409, Cys412, Cys427, and Cys433. The BRCT domain maps to 592–670; the sequence is ASENLFKDKT…EEEFLAQITR (79 aa).

This sequence belongs to the NAD-dependent DNA ligase family. LigA subfamily. The cofactor is Mg(2+). Mn(2+) is required as a cofactor.

It catalyses the reaction NAD(+) + (deoxyribonucleotide)n-3'-hydroxyl + 5'-phospho-(deoxyribonucleotide)m = (deoxyribonucleotide)n+m + AMP + beta-nicotinamide D-nucleotide.. Its function is as follows. DNA ligase that catalyzes the formation of phosphodiester linkages between 5'-phosphoryl and 3'-hydroxyl groups in double-stranded DNA using NAD as a coenzyme and as the energy source for the reaction. It is essential for DNA replication and repair of damaged DNA. The sequence is that of DNA ligase from Haemophilus influenzae (strain 86-028NP).